The sequence spans 352 residues: GTPase Obg (352 aa).

The region spanning 1-159 is the Obg domain; sequence MHFLDQAKIF…MYVWLRLKLL (159 aa). The interval 122 to 142 is disordered; it reads DGGRGNASYKTSTNRAPRQHG. An OBG-type G domain is found at 160–328; that stretch reads ADAGLVGLPN…LLDAVLEYLP (169 aa). GTP-binding positions include 166–173, 191–195, 212–215, 280–283, and 309–311; these read GLPNAGKS, FTTLR, DIPG, NKID, and SGA. 2 residues coordinate Mg(2+): Ser-173 and Thr-193.

It belongs to the TRAFAC class OBG-HflX-like GTPase superfamily. OBG GTPase family. Monomer. Requires Mg(2+) as cofactor.

The protein localises to the cytoplasm. In terms of biological role, an essential GTPase which binds GTP, GDP and possibly (p)ppGpp with moderate affinity, with high nucleotide exchange rates and a fairly low GTP hydrolysis rate. Plays a role in control of the cell cycle, stress response, ribosome biogenesis and in those bacteria that undergo differentiation, in morphogenesis control. The chain is GTPase Obg from Novosphingobium aromaticivorans (strain ATCC 700278 / DSM 12444 / CCUG 56034 / CIP 105152 / NBRC 16084 / F199).